Consider the following 157-residue polypeptide: 2-C-methyl-D-erythritol 2,4-cyclodiphosphate synthase (157 aa).

A divalent metal cation contacts are provided by Asp8 and His10. 4-CDP-2-C-methyl-D-erythritol 2-phosphate contacts are provided by residues 8–10 and 34–35; these read DVH and HS. His42 provides a ligand contact to a divalent metal cation. 4-CDP-2-C-methyl-D-erythritol 2-phosphate contacts are provided by residues 56–58, 132–135, and Arg142; these read DIG and TTNE.

The protein belongs to the IspF family. In terms of assembly, homotrimer. Requires a divalent metal cation as cofactor.

It carries out the reaction 4-CDP-2-C-methyl-D-erythritol 2-phosphate = 2-C-methyl-D-erythritol 2,4-cyclic diphosphate + CMP. It participates in isoprenoid biosynthesis; isopentenyl diphosphate biosynthesis via DXP pathway; isopentenyl diphosphate from 1-deoxy-D-xylulose 5-phosphate: step 4/6. Functionally, involved in the biosynthesis of isopentenyl diphosphate (IPP) and dimethylallyl diphosphate (DMAPP), two major building blocks of isoprenoid compounds. Catalyzes the conversion of 4-diphosphocytidyl-2-C-methyl-D-erythritol 2-phosphate (CDP-ME2P) to 2-C-methyl-D-erythritol 2,4-cyclodiphosphate (ME-CPP) with a corresponding release of cytidine 5-monophosphate (CMP). The protein is 2-C-methyl-D-erythritol 2,4-cyclodiphosphate synthase of Chlorobaculum tepidum (strain ATCC 49652 / DSM 12025 / NBRC 103806 / TLS) (Chlorobium tepidum).